A 607-amino-acid polypeptide reads, in one-letter code: Guanine nucleotide-binding protein-like 1 (607 aa).

The span at Met-1–Lys-14 shows a compositional bias: basic residues. A disordered region spans residues Met-1–Tyr-81. Positions Gln-15 to Leu-26 are enriched in basic and acidic residues. 3 positions are modified to phosphoserine: Ser-32, Ser-33, and Ser-34. 2 positions are modified to phosphothreonine: Thr-48 and Thr-50. Phosphoserine occurs at positions 51 and 68. The CP-type G domain occupies Trp-178 to Pro-418. A GTP-binding site is contributed by Asn-225 to Asp-228. The residue at position 324 (Ser-324) is a Phosphoserine. Residues Gly-367 to Ser-374 and Asp-411 to Leu-415 each bind GTP. Residues Gly-547 to Cys-607 are disordered. Residues Gly-550 to Thr-584 show a composition bias toward acidic residues. Residues Ser-561, Ser-562, and Ser-563 each carry the phosphoserine modification.

It belongs to the TRAFAC class YlqF/YawG GTPase family.

In terms of biological role, possible regulatory or functional link with the histocompatibility cluster. The sequence is that of Guanine nucleotide-binding protein-like 1 (GNL1) from Pongo abelii (Sumatran orangutan).